Here is a 632-residue protein sequence, read N- to C-terminus: Probable potassium transport system protein Kup 2 (632 aa).

The next 12 membrane-spanning stretches (helical) occupy residues 19–39, 58–78, 110–130, 147–167, 178–198, 216–236, 257–277, 290–310, 347–367, 377–397, 404–424, and 429–449; these read FWGL…TSPL, MIVL…VTAK, MFLM…SMIT, PALE…LFAV, AFGP…IVHI, FLLS…LAVT, WLFF…ALVL, MVPE…TVIA, IYLP…VLLF, YGIA…VVIW, AAVA…FFSA, and LFEG…TIWT.

The protein belongs to the HAK/KUP transporter (TC 2.A.72) family.

The protein localises to the cell inner membrane. It carries out the reaction K(+)(in) + H(+)(in) = K(+)(out) + H(+)(out). Transport of potassium into the cell. Likely operates as a K(+):H(+) symporter. The chain is Probable potassium transport system protein Kup 2 from Bradyrhizobium sp. (strain BTAi1 / ATCC BAA-1182).